We begin with the raw amino-acid sequence, 437 residues long: UDP-N-acetylmuramate--L-alanine ligase (437 aa).

Residue 108 to 114 (GAHGKTS) coordinates ATP.

The protein belongs to the MurCDEF family.

The protein localises to the cytoplasm. It catalyses the reaction UDP-N-acetyl-alpha-D-muramate + L-alanine + ATP = UDP-N-acetyl-alpha-D-muramoyl-L-alanine + ADP + phosphate + H(+). It functions in the pathway cell wall biogenesis; peptidoglycan biosynthesis. Functionally, cell wall formation. The sequence is that of UDP-N-acetylmuramate--L-alanine ligase from Staphylococcus aureus.